Here is a 222-residue protein sequence, read N- to C-terminus: Peptide methionine sulfoxide reductase MsrA (222 aa).

Cysteine 60 is an active-site residue.

The protein belongs to the MsrA Met sulfoxide reductase family.

The catalysed reaction is L-methionyl-[protein] + [thioredoxin]-disulfide + H2O = L-methionyl-(S)-S-oxide-[protein] + [thioredoxin]-dithiol. The enzyme catalyses [thioredoxin]-disulfide + L-methionine + H2O = L-methionine (S)-S-oxide + [thioredoxin]-dithiol. Its function is as follows. Has an important function as a repair enzyme for proteins that have been inactivated by oxidation. Catalyzes the reversible oxidation-reduction of methionine sulfoxide in proteins to methionine. This chain is Peptide methionine sulfoxide reductase MsrA, found in Pseudomonas putida (strain ATCC 47054 / DSM 6125 / CFBP 8728 / NCIMB 11950 / KT2440).